A 372-amino-acid polypeptide reads, in one-letter code: 4-hydroxy-3-methylbut-2-en-1-yl diphosphate synthase (flavodoxin) (372 aa).

[4Fe-4S] cluster is bound by residues Cys-270, Cys-273, Cys-305, and Glu-312.

This sequence belongs to the IspG family. It depends on [4Fe-4S] cluster as a cofactor.

It carries out the reaction (2E)-4-hydroxy-3-methylbut-2-enyl diphosphate + oxidized [flavodoxin] + H2O + 2 H(+) = 2-C-methyl-D-erythritol 2,4-cyclic diphosphate + reduced [flavodoxin]. Its pathway is isoprenoid biosynthesis; isopentenyl diphosphate biosynthesis via DXP pathway; isopentenyl diphosphate from 1-deoxy-D-xylulose 5-phosphate: step 5/6. Converts 2C-methyl-D-erythritol 2,4-cyclodiphosphate (ME-2,4cPP) into 1-hydroxy-2-methyl-2-(E)-butenyl 4-diphosphate. The polypeptide is 4-hydroxy-3-methylbut-2-en-1-yl diphosphate synthase (flavodoxin) (Escherichia coli (strain SMS-3-5 / SECEC)).